Consider the following 424-residue polypeptide: Serine--tRNA ligase (424 aa).

231-233 (TAE) contributes to the L-serine binding site. ATP is bound at residue 262–264 (RSE). Residue Glu285 coordinates L-serine. 349–352 (EISS) is an ATP binding site. Residue Ser385 participates in L-serine binding.

The protein belongs to the class-II aminoacyl-tRNA synthetase family. Type-1 seryl-tRNA synthetase subfamily. Homodimer. The tRNA molecule binds across the dimer.

The protein localises to the cytoplasm. It catalyses the reaction tRNA(Ser) + L-serine + ATP = L-seryl-tRNA(Ser) + AMP + diphosphate + H(+). It carries out the reaction tRNA(Sec) + L-serine + ATP = L-seryl-tRNA(Sec) + AMP + diphosphate + H(+). The protein operates within aminoacyl-tRNA biosynthesis; selenocysteinyl-tRNA(Sec) biosynthesis; L-seryl-tRNA(Sec) from L-serine and tRNA(Sec): step 1/1. Its function is as follows. Catalyzes the attachment of serine to tRNA(Ser). Is also able to aminoacylate tRNA(Sec) with serine, to form the misacylated tRNA L-seryl-tRNA(Sec), which will be further converted into selenocysteinyl-tRNA(Sec). This is Serine--tRNA ligase from Bacillus cereus (strain AH187).